A 519-amino-acid chain; its full sequence is Cytochrome P450 52A12 (519 aa).

Cys-467 provides a ligand contact to heme.

It belongs to the cytochrome P450 family. Requires heme as cofactor.

Its subcellular location is the membrane. Its function is as follows. Together with an NADPH cytochrome P450 the enzyme system catalyzes the terminal hydroxylation as the first step in the assimilation of alkanes and fatty acids. In Debaryomyces hansenii (Yeast), this protein is Cytochrome P450 52A12 (CYP52A12).